Consider the following 379-residue polypeptide: Early boundary activity protein 3 (379 aa).

As to quaternary structure, the heterotrimeric Elba complex consists of Elba1, Elba2 and Elba3.

The protein localises to the nucleus. Its function is as follows. The heterotrimeric Elba complex is required for chromatin domain boundary function during early embryogenesis. It binds to a 8-bp sequence 5'-CCAATAAG-3' in the Fab-7 insulator or boundary element in the bithorax complex and contributes to its insulator or boundary activity. Elba3 lacks DNA-binding activity and plays the role of an adapter protein, bringing Elba1 and 2 together, thereby establishing a complex that recognizes the asymmetric sequence motif through the BEN domains of Elba1 and 2. In Drosophila melanogaster (Fruit fly), this protein is Early boundary activity protein 3.